Here is a 589-residue protein sequence, read N- to C-terminus: Netrin-G2 (589 aa).

Residues 1 to 17 (MLRLLALFLHCLPLVSG) form the signal peptide. 3 disulfides stabilise this stretch: Cys22–Cys39, Cys61–Cys81, and Cys69–Cys77. The region spanning 35–286 (EFYACQPKVM…AISNIEVIGR (252 aa)) is the Laminin N-terminal domain. The interval 69 to 88 (CSHENPYLCSNECDASNPDL) is NGL discriminant loop I. N-linked (GlcNAc...) asparagine glycosylation is found at Asn122 and Asn128. Cys171 and Cys195 are oxidised to a cystine. An NGL discriminant loop II region spans residues 201 to 203 (RWA). The tract at residues 264 to 267 (TYVQ) is NGL discriminant loop III. 15 cysteine pairs are disulfide-bonded: Cys287-Cys296, Cys289-Cys305, Cys307-Cys316, Cys319-Cys344, Cys413-Cys422, Cys415-Cys433, Cys436-Cys445, Cys448-Cys466, Cys469-Cys481, Cys471-Cys487, Cys489-Cys498, Cys501-Cys511, Cys516-Cys529, Cys523-Cys535, and Cys537-Cys546. Laminin EGF-like domains lie at 287 to 346 (CKCN…ACAA), 413 to 468 (CECY…VCIE), and 469 to 513 (CNCN…GCYP). A glycan (N-linked (GlcNAc...) asparagine) is linked at Asn310. Asn455 carries an N-linked (GlcNAc...) asparagine glycan. N-linked (GlcNAc...) asparagine glycosylation occurs at Asn482. A lipid anchor (GPI-anchor amidated glycine) is attached at Gly566. Positions 567-589 (IVPRPDTLLGCLLLLGLAARLAC) are cleaved as a propeptide — removed in mature form.

Interacts with LRRC4. In terms of processing, N-glycosylated. Expression is restricted primarily to neurons of the CNS, particularly in the cerebral cortex, habenular nucleus and superior colliculus. Low levels in lung, kidney, heart and spleen.

The protein localises to the cell membrane. Functionally, involved in controlling patterning and neuronal circuit formation at the laminar, cellular, subcellular and synaptic levels. Promotes neurite outgrowth of both axons and dendrites. The sequence is that of Netrin-G2 (Ntng2) from Mus musculus (Mouse).